Reading from the N-terminus, the 486-residue chain is Photosystem II CP43 reaction center protein (486 aa).

Positions 1 to 28 are excised as a propeptide; it reads MKVFVHGWQHKISHTRILYSLRRFYHVE. Helical transmembrane passes span 82–106, 147–168, 191–213, 268–288, and 304–325; these read LFEV…PHLA, LIGP…RDKN, KALF…RLIN, KPFA…LSYS, and WYNN…ASQA. Glu380 provides a ligand contact to [CaMn4O5] cluster. The helical transmembrane segment at 460 to 484 threads the bilayer; sequence RARAAAAGFEKGINRENEAVLSMRP.

It belongs to the PsbB/PsbC family. PsbC subfamily. PSII is composed of 1 copy each of membrane proteins PsbA, PsbB, PsbC, PsbD, PsbE, PsbF, PsbH, PsbI, PsbJ, PsbK, PsbL, PsbM, PsbT, PsbX, PsbY, PsbZ, Psb30/Ycf12, at least 3 peripheral proteins of the oxygen-evolving complex and a large number of cofactors. It forms dimeric complexes. Requires Binds multiple chlorophylls and provides some of the ligands for the Ca-4Mn-5O cluster of the oxygen-evolving complex. It may also provide a ligand for a Cl- that is required for oxygen evolution. PSII binds additional chlorophylls, carotenoids and specific lipids. as cofactor.

The protein resides in the plastid. It is found in the chloroplast thylakoid membrane. Its function is as follows. One of the components of the core complex of photosystem II (PSII). It binds chlorophyll and helps catalyze the primary light-induced photochemical processes of PSII. PSII is a light-driven water:plastoquinone oxidoreductase, using light energy to abstract electrons from H(2)O, generating O(2) and a proton gradient subsequently used for ATP formation. In Gracilaria tenuistipitata var. liui (Red alga), this protein is Photosystem II CP43 reaction center protein.